The chain runs to 311 residues: Homoserine kinase (311 aa).

96–106 (PLARGLGSSAA) is a binding site for ATP.

This sequence belongs to the GHMP kinase family. Homoserine kinase subfamily.

Its subcellular location is the cytoplasm. The catalysed reaction is L-homoserine + ATP = O-phospho-L-homoserine + ADP + H(+). Its pathway is amino-acid biosynthesis; L-threonine biosynthesis; L-threonine from L-aspartate: step 4/5. In terms of biological role, catalyzes the ATP-dependent phosphorylation of L-homoserine to L-homoserine phosphate. This chain is Homoserine kinase, found in Natranaerobius thermophilus (strain ATCC BAA-1301 / DSM 18059 / JW/NM-WN-LF).